We begin with the raw amino-acid sequence, 477 residues long: MPGSDTALTVDRTYSYPGRHHRCKSRVERHDMNTLSLPLNIRRGGSDTNLNFDVPDGILDFHKVKLTADSLKQKILKVTEQIKIEQTSRDGNVAEYLKLVNNADKQQAGRIKQVFEKKNQKSAHSIAQLQKKLEQYHRKLREIEQNGASRSSKDISKDHLKDIHRSLKDAHVKSRTAPHCMESSKSGMPGVSLTPPVFVFNKSREFANLIRNKFGSADNIAHLKNSLEEFRPEASARAYGGSATIVNKPKYGSDDECSSGTSGSADSNGNQSFGAGGASTLDSQGKLAVILEELREIKDTQAQLAEDIEALKVQFKREYGFISQTLQEERYRYERLEDQLHDLTDLHQHETANLKQELASIEEKVAYQAYERSRDIQEALESCQTRISKLELHQQEQQALQTDTVNAKVLLGRCINVILAFMTVILVCVSTIAKFVSPMMKSRCHILGTFFAVTLLAIFCKNWDHILCAIERMIIPR.

S46 is modified (phosphoserine). The stretch at 112 to 153 (KQVFEKKNQKSAHSIAQLQKKLEQYHRKLREIEQNGASRSSK) forms a coiled coil. Disordered regions lie at residues 168-188 (KDAH…KSGM) and 249-277 (PKYG…GAGG). S253 bears the Phosphoserine mark. Over residues 258–273 (SSGTSGSADSNGNQSF) the composition is skewed to polar residues. Positions 282–398 (DSQGKLAVIL…KLELHQQEQQ (117 aa)) form a coiled coil. A run of 2 helical transmembrane segments spans residues 417 to 437 (VILA…KFVS) and 450 to 470 (FFAV…LCAI).

Belongs to the TEX28 family. In terms of assembly, may form homodimers and heterodimers with TMCC2 or TMCC3 via the coiled-coil domains. Interacts with ribosomal proteins RPL4 and RPS6. Widely expressed, with highest levels in brain, spinal cord and testis.

The protein localises to the endoplasmic reticulum membrane. This Homo sapiens (Human) protein is Transmembrane and coiled-coil domain protein 3.